We begin with the raw amino-acid sequence, 130 residues long: Small ribosomal subunit protein uS9 (130 aa).

This sequence belongs to the universal ribosomal protein uS9 family.

The chain is Small ribosomal subunit protein uS9 from Vibrio vulnificus (strain CMCP6).